The following is a 569-amino-acid chain: Urease subunit alpha (569 aa).

The Urease domain occupies glycine 131 to leucine 569. 3 residues coordinate Ni(2+): histidine 136, histidine 138, and lysine 219. N6-carboxylysine is present on lysine 219. Histidine 221 contacts substrate. Histidine 248 and histidine 274 together coordinate Ni(2+). Histidine 322 functions as the Proton donor in the catalytic mechanism. Aspartate 362 is a binding site for Ni(2+).

Belongs to the metallo-dependent hydrolases superfamily. Urease alpha subunit family. As to quaternary structure, heterotrimer of UreA (gamma), UreB (beta) and UreC (alpha) subunits. Three heterotrimers associate to form the active enzyme. The cofactor is Ni cation. Carboxylation allows a single lysine to coordinate two nickel ions.

It is found in the cytoplasm. It carries out the reaction urea + 2 H2O + H(+) = hydrogencarbonate + 2 NH4(+). It functions in the pathway nitrogen metabolism; urea degradation; CO(2) and NH(3) from urea (urease route): step 1/1. The chain is Urease subunit alpha from Synechococcus sp. (strain CC9605).